The sequence spans 200 residues: 6,7-dimethyl-8-ribityllumazine synthase (200 aa).

Residues Trp25, 59 to 61, and 119 to 121 contribute to the 5-amino-6-(D-ribitylamino)uracil site; these read SWE and VLI. 124-125 serves as a coordination point for (2S)-2-hydroxy-3-oxobutyl phosphate; it reads ET. His127 serves as the catalytic Proton donor. Phe152 lines the 5-amino-6-(D-ribitylamino)uracil pocket. Arg166 is a (2S)-2-hydroxy-3-oxobutyl phosphate binding site.

This sequence belongs to the DMRL synthase family. As to quaternary structure, homopentamer.

The enzyme catalyses (2S)-2-hydroxy-3-oxobutyl phosphate + 5-amino-6-(D-ribitylamino)uracil = 6,7-dimethyl-8-(1-D-ribityl)lumazine + phosphate + 2 H2O + H(+). Its pathway is cofactor biosynthesis; riboflavin biosynthesis; riboflavin from 2-hydroxy-3-oxobutyl phosphate and 5-amino-6-(D-ribitylamino)uracil: step 1/2. Its function is as follows. Catalyzes the formation of 6,7-dimethyl-8-ribityllumazine by condensation of 5-amino-6-(D-ribitylamino)uracil with 3,4-dihydroxy-2-butanone 4-phosphate. This is the penultimate step in the biosynthesis of riboflavin. The chain is 6,7-dimethyl-8-ribityllumazine synthase from Pyricularia oryzae (strain 70-15 / ATCC MYA-4617 / FGSC 8958) (Rice blast fungus).